Reading from the N-terminus, the 265-residue chain is 4-hydroxy-tetrahydrodipicolinate reductase (265 aa).

Position 9–14 (9–14 (GPRGRM)) interacts with NAD(+). Residue arginine 37 participates in NADP(+) binding. Residues 98-100 (GTT) and 124-127 (APNF) contribute to the NAD(+) site. Residue histidine 154 is the Proton donor/acceptor of the active site. Histidine 155 serves as a coordination point for (S)-2,3,4,5-tetrahydrodipicolinate. Catalysis depends on lysine 158, which acts as the Proton donor. 164–165 (GT) is a binding site for (S)-2,3,4,5-tetrahydrodipicolinate.

Belongs to the DapB family.

It localises to the cytoplasm. It catalyses the reaction (S)-2,3,4,5-tetrahydrodipicolinate + NAD(+) + H2O = (2S,4S)-4-hydroxy-2,3,4,5-tetrahydrodipicolinate + NADH + H(+). The enzyme catalyses (S)-2,3,4,5-tetrahydrodipicolinate + NADP(+) + H2O = (2S,4S)-4-hydroxy-2,3,4,5-tetrahydrodipicolinate + NADPH + H(+). It functions in the pathway amino-acid biosynthesis; L-lysine biosynthesis via DAP pathway; (S)-tetrahydrodipicolinate from L-aspartate: step 4/4. In terms of biological role, catalyzes the conversion of 4-hydroxy-tetrahydrodipicolinate (HTPA) to tetrahydrodipicolinate. This is 4-hydroxy-tetrahydrodipicolinate reductase from Geobacillus thermodenitrificans (strain NG80-2).